Reading from the N-terminus, the 212-residue chain is Probable GTP-binding protein EngB (212 aa).

The 173-residue stretch at 38 to 210 (SLPEIAFVGK…KASLAKCIKP (173 aa)) folds into the EngB-type G domain. Residues 46–53 (GKSNVGKS), 73–77 (GRTRQ), 91–94 (DLPG), 158–161 (TKSD), and 189–191 (VSN) each bind GTP. Residues Ser-53 and Thr-75 each coordinate Mg(2+).

This sequence belongs to the TRAFAC class TrmE-Era-EngA-EngB-Septin-like GTPase superfamily. EngB GTPase family. It depends on Mg(2+) as a cofactor.

Necessary for normal cell division and for the maintenance of normal septation. The protein is Probable GTP-binding protein EngB of Rickettsia peacockii (strain Rustic).